The following is a 106-amino-acid chain: UPF0145 protein CPE0882 (106 aa).

It belongs to the UPF0145 family.

This Clostridium perfringens (strain 13 / Type A) protein is UPF0145 protein CPE0882.